The following is a 262-amino-acid chain: Abhydrolase domain-containing protein ACTT2-1 (262 aa).

The short motif at 260–262 is the Peroxisomal targeting signal type 1 element; the sequence is SKL.

It belongs to the AB hydrolase superfamily. AKT2 hydrolase family.

It localises to the peroxisome. It functions in the pathway mycotoxin biosynthesis. In terms of biological role, abhydrolase domain-containing protein; part of the gene clusters that mediate the biosynthesis of the host-selective toxins (HSTs) ACT-toxins responsible for brown spot of tangerine disease by the tangerine pathotype which affects tangerines and mandarins. ACT-toxins consist of three moieties, 9,10-epoxy-8-hydroxy-9-methyl-decatrienoic acid (EDA), valine and a polyketide. ACT-toxin I is toxic to both citrus and pear; toxin II the 5''-deoxy derivative of ACT-toxin I, is highly toxic to pear and slightly toxic to citrus. On cellular level, ACT-toxins affect plasma membrane of susceptible cells and cause a sudden increase in loss of K(+) after a few minutes of toxin treatment. The acyl-CoA ligase ACTT1, the hydrolase ACTT2, the enoyl-CoA hydratases ACTT3 and ACTT6, and the acyl-CoA synthetase ACTT5 are all involved in the biosynthesis of the AK-, AF- and ACT-toxin common 9,10-epoxy-8-hydroxy-9-methyl-decatrienoic acid (EDA) structural moiety. The exact role of each enzyme, and of additional enzymes identified within the AF-toxin clusters have still to be determined. On the other hand, ACTTS1 to ACTTS4 are specific to the tangerine pathotype. The function of ACTTS3 is to elongate the polyketide chain portion of ACT-toxin that is unique to this toxin. The enoyl-reductase ACTTS2 might complement the missing enoyl-reductase (ER) domain in ACTTS3 in the synthesis of the polyketide portion of ACT-toxin. The roles of the nonribosomal peptide synthetases-related proteins ACTTS1 and ACTTS4 have also still not been elucidated. This is Abhydrolase domain-containing protein ACTT2-1 from Alternaria alternata (Alternaria rot fungus).